Consider the following 1002-residue polypeptide: BLOC-2 complex member HPS3 (1002 aa).

Residues 218–239 (GESVDHHPQETSNPLKEAEGVS) form a disordered region.

Component of the biogenesis of lysosome-related organelles complex-2 (or BLOC2) composed of HPS3, HPS5 and HPS6. Interacts with HPS5 and HPS6. Found in heart, brain, spleen, liver, lung, kidney and testis.

It is found in the cytoplasm. The protein resides in the cytosol. Its function is as follows. Involved in early stages of melanosome biogenesis and maturation. The polypeptide is BLOC-2 complex member HPS3 (Hps3) (Mus musculus (Mouse)).